The following is a 936-amino-acid chain: Translation initiation factor IF-2 (936 aa).

The interval Pro102 to Met332 is disordered. Residues Leu108–Lys119 show a composition bias toward basic and acidic residues. Positions Ser127–Pro137 are enriched in acidic residues. The segment covering Pro151–Pro160 has biased composition (low complexity). The segment covering Gln182–Met194 has biased composition (polar residues). Composition is skewed to basic and acidic residues over residues Ser217 to Arg227 and Lys237 to Thr267. Positions Lys272–Ala281 are enriched in low complexity. Residues Ser287–Lys297 are compositionally biased toward basic residues. The region spanning Ile433–Lys603 is the tr-type G domain. The tract at residues Gly442–Thr449 is G1. A GTP-binding site is contributed by Gly442–Thr449. Residues Gly467 to His471 form a G2 region. The G3 stretch occupies residues Asp489 to Gly492. Residues Asp489–His493 and Asn543–Asp546 contribute to the GTP site. The tract at residues Asn543 to Asp546 is G4. The tract at residues Ser579–Lys581 is G5.

Belongs to the TRAFAC class translation factor GTPase superfamily. Classic translation factor GTPase family. IF-2 subfamily.

It is found in the cytoplasm. Functionally, one of the essential components for the initiation of protein synthesis. Protects formylmethionyl-tRNA from spontaneous hydrolysis and promotes its binding to the 30S ribosomal subunits. Also involved in the hydrolysis of GTP during the formation of the 70S ribosomal complex. In Prosthecochloris aestuarii (strain DSM 271 / SK 413), this protein is Translation initiation factor IF-2.